Here is a 385-residue protein sequence, read N- to C-terminus: Homoserine O-succinyltransferase (385 aa).

In terms of domain architecture, AB hydrolase-1 spans 45–355 (NAVLVCHALN…PHGHDAFLLD (311 aa)). Ser-151 acts as the Nucleophile in catalysis. A substrate-binding site is contributed by Arg-221. Active-site residues include Asp-316 and His-349. Asp-350 contributes to the substrate binding site.

Belongs to the AB hydrolase superfamily. MetX family. Homodimer.

The protein resides in the cytoplasm. It carries out the reaction L-homoserine + succinyl-CoA = O-succinyl-L-homoserine + CoA. Its pathway is amino-acid biosynthesis; L-methionine biosynthesis via de novo pathway; O-succinyl-L-homoserine from L-homoserine: step 1/1. Its function is as follows. Transfers a succinyl group from succinyl-CoA to L-homoserine, forming succinyl-L-homoserine. The sequence is that of Homoserine O-succinyltransferase from Janthinobacterium sp. (strain Marseille) (Minibacterium massiliensis).